A 140-amino-acid polypeptide reads, in one-letter code: Large ribosomal subunit protein uL11 (140 aa).

This sequence belongs to the universal ribosomal protein uL11 family. As to quaternary structure, part of the ribosomal stalk of the 50S ribosomal subunit. Interacts with L10 and the large rRNA to form the base of the stalk. L10 forms an elongated spine to which L12 dimers bind in a sequential fashion forming a multimeric L10(L12)X complex. Post-translationally, one or more lysine residues are methylated.

In terms of biological role, forms part of the ribosomal stalk which helps the ribosome interact with GTP-bound translation factors. The sequence is that of Large ribosomal subunit protein uL11 from Dehalococcoides mccartyi (strain ATCC BAA-2266 / KCTC 15142 / 195) (Dehalococcoides ethenogenes (strain 195)).